The chain runs to 288 residues: MTEWSVWPAPAKINLFLHVLGRRADGYHELQTAFQLLGYGDRIWLRPRVDGRVERCSHLPGVAAEDDLTVRAARALQAATGSAGGVDIHVDKRLPAGGGVGGGSSDAATVLVALNHLWQTGLDEEALAGIGLALGADVPVFVRGRSAWGEGVGEQLRPMPVDPAGSRWYLVVDPGASISTAEVFGAPELTRDTSPITIPDLRAGAVRNDCEPVVRSRWPAVAEALEWLGRHGQARMSGTGSCCFVGFPGEAEAQAALERLPGAWSGFVAQAVERSPLHLTLAEAARTG.

The active site involves Lys12. 95-105 (PAGGGVGGGSS) is a binding site for ATP. Asp137 is an active-site residue.

Belongs to the GHMP kinase family. IspE subfamily.

It carries out the reaction 4-CDP-2-C-methyl-D-erythritol + ATP = 4-CDP-2-C-methyl-D-erythritol 2-phosphate + ADP + H(+). Its pathway is isoprenoid biosynthesis; isopentenyl diphosphate biosynthesis via DXP pathway; isopentenyl diphosphate from 1-deoxy-D-xylulose 5-phosphate: step 3/6. In terms of biological role, catalyzes the phosphorylation of the position 2 hydroxy group of 4-diphosphocytidyl-2C-methyl-D-erythritol. The polypeptide is 4-diphosphocytidyl-2-C-methyl-D-erythritol kinase (Halorhodospira halophila (strain DSM 244 / SL1) (Ectothiorhodospira halophila (strain DSM 244 / SL1))).